The primary structure comprises 353 residues: MENGGRPSVGQVILLTTSSAITALFYSIYRHKYRSVQTLKEAKKFCLTDDLPAVLSDLPGKCVPYAVIEGAVTSVKEVLNSQYVENCKGVIQRLSLKEHKMVWNRTTHLWNDHEKIIHQRSNTVPFDLAPENPGESGVSVRVLRPLEAVDLGLETIYEKFHPAVQSFSNILGHYMTGERPKGVQETEEMLKIGATITGVGELVLDNKTIKLQPPKDGMLFYLSSMDYEGLLEKQEVQMRWWRILSIVFGVASCITLFFILRRKYRHYKEKQHLKNLQREFEESRARQRVQQEPQNKEEVQNPCSICLSTEKSCVFLECGHVCSCISCYQALPSPKKCPICRNFIDRIVPLYNS.

The Cytoplasmic segment spans residues 1-8; it reads MENGGRPS. Residues 9 to 29 form a helical membrane-spanning segment; sequence VGQVILLTTSSAITALFYSIY. Over 30–239 the chain is Mitochondrial intermembrane; the sequence is RHKYRSVQTL…LLEKQEVQMR (210 aa). Residues 240-260 form a helical membrane-spanning segment; the sequence is WWRILSIVFGVASCITLFFIL. Topologically, residues 261–353 are cytoplasmic; sequence RRKYRHYKEK…IDRIVPLYNS (93 aa). An RING-type zinc finger spans residues 303-341; that stretch reads CSICLSTEKSCVFLECGHVCSCISCYQALPSPKKCPICR.

Homooligomer.

The protein resides in the mitochondrion outer membrane. It catalyses the reaction S-ubiquitinyl-[E2 ubiquitin-conjugating enzyme]-L-cysteine + [acceptor protein]-L-lysine = [E2 ubiquitin-conjugating enzyme]-L-cysteine + N(6)-ubiquitinyl-[acceptor protein]-L-lysine.. It participates in protein modification; protein ubiquitination. In terms of biological role, E3 ubiquitin-protein ligase that plays a role in the control of mitochondrial morphology. Promotes mitochondrial fragmentation and influences mitochondrial localization. Inhibits cell growth. E3 ubiquitin ligases accept ubiquitin from an E2 ubiquitin-conjugating enzyme in the form of a thioester and then directly transfer the ubiquitin to targeted substrates. In Xenopus laevis (African clawed frog), this protein is Mitochondrial ubiquitin ligase activator of nfkb 1 (mul1).